An 862-amino-acid chain; its full sequence is DNA replication licensing factor MCM4 (862 aa).

The segment covering 1–10 (MSSPASTPSR) has biased composition (low complexity). Disordered stretches follow at residues 1–71 (MSSP…FSSP) and 90–121 (TYGT…GSAR). Ser-2 is subject to N-acetylserine. The residue at position 6 (Ser-6) is a Phosphoserine. Residues Thr-7 and Thr-19 each carry the phosphothreonine modification. 3 positions are modified to phosphoserine: Ser-26, Ser-31, and Ser-32. Polar residues predominate over residues 61 to 71 (PPAQNALFSSP). Thr-101 carries the post-translational modification Phosphothreonine. Ser-104 carries the post-translational modification Phosphoserine. Position 109 is a phosphothreonine (Thr-109). 4 positions are modified to phosphoserine: Ser-119, Ser-130, Ser-141, and Ser-144. Residue Lys-219 is modified to N6-acetyllysine. Lys-438 participates in a covalent cross-link: Glycyl lysine isopeptide (Lys-Gly) (interchain with G-Cter in SUMO2). Lys-449 carries the post-translational modification N6-acetyllysine. Residues 457–666 (IYERLASALA…YDRRLAHHLV (210 aa)) enclose the MCM domain. ATP-binding residues include Tyr-470, Arg-496, Lys-515, Ser-516, Asn-617, Arg-642, Arg-731, and Glu-734. The short motif at 641–644 (SRFD) is the Arginine finger element. Lys-797 is covalently cross-linked (Glycyl lysine isopeptide (Lys-Gly) (interchain with G-Cter in SUMO2)). Position 857 is an N6-acetyllysine (Lys-857).

This sequence belongs to the MCM family. Component of the MCM2-7 complex. The complex forms a toroidal hexameric ring with the proposed subunit order MCM2-MCM6-MCM4-MCM7-MCM3-MCM5. Component of the CMG helicase complex, a hexameric ring of related MCM2-7 subunits stabilized by CDC45 and the tetrameric GINS complex. Interacts with MCMBP. Sumoylated; SUMO2 modified in response to stress caused by inhibition of proteasome activity (in vitro).

It is found in the nucleus. Its subcellular location is the chromosome. It carries out the reaction ATP + H2O = ADP + phosphate + H(+). Acts as a component of the MCM2-7 complex (MCM complex) which is the replicative helicase essential for 'once per cell cycle' DNA replication initiation and elongation in eukaryotic cells. Core component of CDC45-MCM-GINS (CMG) helicase, the molecular machine that unwinds template DNA during replication, and around which the replisome is built. The active ATPase sites in the MCM2-7 ring are formed through the interaction surfaces of two neighboring subunits such that a critical structure of a conserved arginine finger motif is provided in trans relative to the ATP-binding site of the Walker A box of the adjacent subunit. The six ATPase active sites, however, are likely to contribute differentially to the complex helicase activity. The chain is DNA replication licensing factor MCM4 (Mcm4) from Mus musculus (Mouse).